Here is a 148-residue protein sequence, read N- to C-terminus: MICSQYGPVVVGWDGSKTFVNPSRCSKRVGLAEFLELINIDEIDKRLLYLLGIPRGYVTTYKLYAEVLGTSPRHVGWLMARNPLPVILPCHRVVKSDFSLGGYTGGVEVKKKLLAYEGALCGDRPCRVVRPRMIDDVRDALFKSLGLA.

The active-site Nucleophile; methyl group acceptor is the C90.

It belongs to the MGMT family.

It is found in the cytoplasm. The enzyme catalyses a 6-O-methyl-2'-deoxyguanosine in DNA + L-cysteinyl-[protein] = S-methyl-L-cysteinyl-[protein] + a 2'-deoxyguanosine in DNA. It carries out the reaction a 4-O-methyl-thymidine in DNA + L-cysteinyl-[protein] = a thymidine in DNA + S-methyl-L-cysteinyl-[protein]. Involved in the cellular defense against the biological effects of O6-methylguanine (O6-MeG) and O4-methylthymine (O4-MeT) in DNA. Repairs the methylated nucleobase in DNA by stoichiometrically transferring the methyl group to a cysteine residue in the enzyme. This is a suicide reaction: the enzyme is irreversibly inactivated. In Pyrobaculum aerophilum (strain ATCC 51768 / DSM 7523 / JCM 9630 / CIP 104966 / NBRC 100827 / IM2), this protein is Methylated-DNA--protein-cysteine methyltransferase (ogt).